The following is a 291-amino-acid chain: Protease HtpX homolog (291 aa).

Transmembrane regions (helical) follow at residues 4-24 (VFLFLITNLAVILVLSFSARL) and 38-58 (MGMLLAFAALIGFGGSFISLL). Zn(2+) is bound at residue H144. The active site involves E145. H148 lines the Zn(2+) pocket. A run of 2 helical transmembrane segments spans residues 159–179 (LIQGVVNTFVIFLARVFAYAL) and 199–219 (ISSIAFEIVFGILASIVVMYF). E224 serves as a coordination point for Zn(2+).

It belongs to the peptidase M48B family. The cofactor is Zn(2+).

The protein localises to the cell inner membrane. The sequence is that of Protease HtpX homolog from Chlorobium phaeovibrioides (strain DSM 265 / 1930) (Prosthecochloris vibrioformis (strain DSM 265)).